A 435-amino-acid chain; its full sequence is Angio-associated migratory cell protein (435 aa).

The tract at residues 1–65 (MESESESGAA…EEEEEGNEEG (65 aa)) is disordered. Residue Ser-20 is modified to Phosphoserine. The segment covering 39-63 (DPDDLAQEMEDVDFEEEEEEEEGNE) has biased composition (acidic residues). WD repeat units lie at residues 90 to 130 (LHSA…LLFE), 133 to 172 (GHKDSVTCAGFSHDSTLVATGDMSGLLKVWQVDTKEEVWS), 174 to 213 (EAGDLEWMEWHPRAPVLLAGTADGNTWMWKVPNGDCKTFQ), 215 to 255 (PNCP…HVLK), 259 to 300 (GHQG…GVFR), 316 to 355 (SESNSVESLGFCSVMPLAAVGYLDGTLAIYDLSTQTLRHQ), 357 to 396 (QHQSGIVQLLWEAGTAVVYTCSLDGIVRLWDARTGRLLTD), and 399 to 434 (GHTAEILDFALSKDASLVVTTSGDHKAKVFCVQRPD).

It is found in the cell membrane. The protein localises to the cytoplasm. In terms of biological role, plays a role in angiogenesis and cell migration. In smooth muscle cell migration, may act through the RhoA pathway. In Canis lupus familiaris (Dog), this protein is Angio-associated migratory cell protein (AAMP).